Here is a 156-residue protein sequence, read N- to C-terminus: Large ribosomal subunit protein uL15 (156 aa).

Positions R25–V48 are disordered. Residues T34 to K43 are compositionally biased toward basic residues.

The protein belongs to the universal ribosomal protein uL15 family. In terms of assembly, part of the 50S ribosomal subunit.

Functionally, binds to the 23S rRNA. The chain is Large ribosomal subunit protein uL15 from Wolbachia pipientis wMel.